Consider the following 265-residue polypeptide: Histone H1 (265 aa).

Residues 1 to 27 (MATEEPIVAVETVPEPIVTEPTTITEP) are compositionally biased toward low complexity. Disordered regions lie at residues 1–66 (MATE…PTYE), 131–226 (AAKK…TTPG), and 242–265 (VKSV…GGRK). A compositionally biased stretch (basic and acidic residues) spans 29–42 (VPEKEEPKAEVEKT). The segment covering 43–55 (KKAKGSKPKKASK) has biased composition (basic residues). Residues 61 to 130 (SHPTYEEMIK…KVKGSFKLSA (70 aa)) form the H15 domain. A compositionally biased stretch (basic residues) spans 140 to 171 (PKAKTAAKAKSVKAKPAAKPKAKAVVKPKVAS). Positions 186 to 202 (KPKTVAAKTKPTAAKPK) are enriched in low complexity. The segment covering 203 to 215 (AVVKPKSKVKPAK) has biased composition (basic residues). A compositionally biased stretch (low complexity) spans 216-226 (VAKTSVKTTPG).

It belongs to the histone H1/H5 family.

The protein localises to the nucleus. Its subcellular location is the chromosome. Its function is as follows. Histones H1 are necessary for the condensation of nucleosome chains into higher-order structures. The protein is Histone H1 of Pisum sativum (Garden pea).